Here is a 518-residue protein sequence, read N- to C-terminus: Membrane-bound lytic murein transglycosylase F (518 aa).

Residues Met-1 to Ala-21 form the signal peptide. The interval Leu-22–Gly-269 is non-LT domain. Residues Asp-270 to Asn-518 form an LT domain region. Glu-314 is a catalytic residue.

The protein in the N-terminal section; belongs to the bacterial solute-binding protein 3 family. In the C-terminal section; belongs to the transglycosylase Slt family.

The protein localises to the cell outer membrane. The catalysed reaction is Exolytic cleavage of the (1-&gt;4)-beta-glycosidic linkage between N-acetylmuramic acid (MurNAc) and N-acetylglucosamine (GlcNAc) residues in peptidoglycan, from either the reducing or the non-reducing ends of the peptidoglycan chains, with concomitant formation of a 1,6-anhydrobond in the MurNAc residue.. Murein-degrading enzyme that degrades murein glycan strands and insoluble, high-molecular weight murein sacculi, with the concomitant formation of a 1,6-anhydromuramoyl product. Lytic transglycosylases (LTs) play an integral role in the metabolism of the peptidoglycan (PG) sacculus. Their lytic action creates space within the PG sacculus to allow for its expansion as well as for the insertion of various structures such as secretion systems and flagella. The polypeptide is Membrane-bound lytic murein transglycosylase F (Escherichia coli (strain ATCC 8739 / DSM 1576 / NBRC 3972 / NCIMB 8545 / WDCM 00012 / Crooks)).